The primary structure comprises 317 residues: Melanocyte-stimulating hormone receptor (317 aa).

The Extracellular segment spans residues 1-37; it reads MPMQGAQRKLLGSLNSTPTATSNLGLAANHTGAPCLE. The N-linked (GlcNAc...) asparagine glycan is linked to asparagine 29. The chain crosses the membrane as a helical span at residues 38–63; it reads VSIPDGLFLSLGLVSLVENVLVVAAV. Topologically, residues 64 to 72 are cytoplasmic; sequence AKNRNLHSS. A helical transmembrane segment spans residues 73 to 93; it reads MYCFICCLALSDLLVSGSNML. The Extracellular portion of the chain corresponds to 94–118; the sequence is ETAVILLLETGALATRTSVVQQLHN. Residues 119–140 form a helical membrane-spanning segment; the sequence is TINVLTCSSMLCSLCFLGAIAV. The Cytoplasmic segment spans residues 141 to 163; sequence DRYISIFYALRYHSIMTLPRAQR. Residues 164-183 traverse the membrane as a helical segment; the sequence is AIAAIWVASVLSSTLFITYY. Residues 184-191 are Extracellular-facing; it reads DHAAVLLC. Residues 192-211 traverse the membrane as a helical segment; it reads LVVFFLAMLVLMAVLYVHML. Topologically, residues 212–240 are cytoplasmic; the sequence is ARACQHAHGIIRLHKRQTPAHQGFGLRGA. Residues 241–266 traverse the membrane as a helical segment; that stretch reads ATLTILLGIFFLCWGPFFLHLTLVVF. The Extracellular portion of the chain corresponds to 267 to 279; that stretch reads CPQHLTCSCIFKN. Residues 280–300 traverse the membrane as a helical segment; the sequence is FKVFLTLIICNTIIDPLIYAF. At 301–317 the chain is on the cytoplasmic side; the sequence is RSQELRRTLKEVLLCSW. A lipid anchor (S-palmitoyl cysteine) is attached at cysteine 315.

This sequence belongs to the G-protein coupled receptor 1 family. As to quaternary structure, interacts with MGRN1, but does not undergo MGRN1-mediated ubiquitination; this interaction competes with GNAS-binding and thus inhibits agonist-induced cAMP production. Interacts with OPN3; the interaction results in a decrease in MC1R-mediated cAMP signaling and ultimately a decrease in melanin production in melanocytes.

It localises to the cell membrane. Receptor for MSH (alpha, beta and gamma) and ACTH. The activity of this receptor is mediated by G proteins which activate adenylate cyclase. Mediates melanogenesis, the production of eumelanin (black/brown) and phaeomelanin (red/yellow), via regulation of cAMP signaling in melanocytes. This is Melanocyte-stimulating hormone receptor (MC1R) from Saguinus oedipus (Cotton-top tamarin).